An 800-amino-acid polypeptide reads, in one-letter code: Protein gfi-3 (800 aa).

A coiled-coil region spans residues 346 to 366 (ESLQQAQLRNDEICHQMANIE). TPR repeat units lie at residues 526–559 (AIGAVNLSYSQAGVGNYDAALRTIEEMRQNYPEE) and 637–670 (IRIHMQTGCIYTASQEFRKAAREFADALSLAENT).

The APC/C complex is probably composed of at least 12 subunits: apc-2, apc-10, apc-11, cdc-26, emb-1, emb-27, emb-30, mat-1, mat-2, mat-3, such-1 and gfi-3. In terms of tissue distribution, expressed in gut cells and mature sperm stored in the spermatheca.

The protein operates within protein modification; protein ubiquitination. Functionally, probable component of the anaphase promoting complex/cyclosome (APC/C), a cell cycle-regulated E3 ubiquitin ligase that controls progression through mitosis and the G1 phase of the cell cycle. The APC/C complex acts by mediating ubiquitination and subsequent degradation of target proteins. Required for the metaphase to anaphase transition in meiosis. The sequence is that of Protein gfi-3 from Caenorhabditis elegans.